Consider the following 285-residue polypeptide: HTH-type transcriptional regulator MurR (285 aa).

Residues 1–77 enclose the HTH rpiR-type domain; that stretch reads MLYLTKIRNA…MALIGEYSAS (77 aa). The H-T-H motif DNA-binding region spans 37-56; sequence SRKMAKQLGISQSSIVKFAQ. In terms of domain architecture, SIS spans 128–268; the sequence is IIEVISKAPF…FVGLVQLNDV (141 aa).

In terms of assembly, homotetramer.

The protein operates within amino-sugar metabolism; N-acetylmuramate degradation [regulation]. In terms of biological role, represses the expression of the murPQ operon involved in the uptake and degradation of N-acetylmuramic acid (MurNAc). Binds to two adjacent inverted repeats within the operator region. MurNAc 6-phosphate, the substrate of MurQ, is the specific inducer that weakens binding of MurR to the operator. This chain is HTH-type transcriptional regulator MurR, found in Escherichia coli O157:H7.